The primary structure comprises 511 residues: Maturase K (511 aa).

This sequence belongs to the intron maturase 2 family. MatK subfamily.

The protein localises to the plastid. Its subcellular location is the chloroplast. Its function is as follows. Usually encoded in the trnK tRNA gene intron. Probably assists in splicing its own and other chloroplast group II introns. This Phleum pratense (Common timothy) protein is Maturase K.